The following is a 291-amino-acid chain: MRLRRAAATVITTGALLAAGTLGATPATAVTKPTIAAVGGYAMNNGTGTTLYTKAADTRRSTGSTTKIMTAKVVLAQSNLNLDAKVTIQKAYSDYVVANKPSQAHLIVGDKVTVRQLLYGLMLPSGCDAAYALADKYGSGSQAAARVKSFIGKMNTAATNLGLHNTHFDSFDGIGNGANYSTPRHLTKIASSAMKNSTFRTVVKTKAYTAKTVTKTGSIRTMDTWKNTNGLLSSYSGAIGVKTGSGPEAKYCLVFAATRGGKTVIGTVLASTSIPARESDATKIMNYGFAL.

Residues M1–A29 form the signal peptide. Residue S64 is the Acyl-ester intermediate of the active site. Catalysis depends on K67, which acts as the Proton acceptor. S125 is a catalytic residue. Substrate is bound at residue K242.

The protein belongs to the peptidase S11 family.

The protein localises to the secreted. The catalysed reaction is Preferential cleavage: (Ac)2-L-Lys-D-Ala-|-D-Ala. Also transpeptidation of peptidyl-alanyl moieties that are N-acyl substituents of D-alanine.. Its pathway is cell wall biogenesis; peptidoglycan biosynthesis. Removes C-terminal D-alanyl residues from sugar-peptide cell wall precursors. The sequence is that of D-alanyl-D-alanine carboxypeptidase from Streptomyces sp. (strain K15).